The sequence spans 273 residues: 4-hydroxy-tetrahydrodipicolinate reductase (273 aa).

Residues 12–17 and Glu38 contribute to the NAD(+) site; that span reads GAGGRM. Residue Arg39 coordinates NADP(+). NAD(+) contacts are provided by residues 102-104 and 126-129; these read GTT and AANF. His159 (proton donor/acceptor) is an active-site residue. (S)-2,3,4,5-tetrahydrodipicolinate is bound at residue His160. The active-site Proton donor is Lys163. Residue 169–170 coordinates (S)-2,3,4,5-tetrahydrodipicolinate; it reads GT.

It belongs to the DapB family. As to quaternary structure, homotetramer.

Its subcellular location is the cytoplasm. It carries out the reaction (S)-2,3,4,5-tetrahydrodipicolinate + NAD(+) + H2O = (2S,4S)-4-hydroxy-2,3,4,5-tetrahydrodipicolinate + NADH + H(+). The catalysed reaction is (S)-2,3,4,5-tetrahydrodipicolinate + NADP(+) + H2O = (2S,4S)-4-hydroxy-2,3,4,5-tetrahydrodipicolinate + NADPH + H(+). It participates in amino-acid biosynthesis; L-lysine biosynthesis via DAP pathway; (S)-tetrahydrodipicolinate from L-aspartate: step 4/4. Catalyzes the conversion of 4-hydroxy-tetrahydrodipicolinate (HTPA) to tetrahydrodipicolinate. In Escherichia coli O157:H7, this protein is 4-hydroxy-tetrahydrodipicolinate reductase.